The primary structure comprises 177 residues: ATP synthase subunit delta (177 aa).

Belongs to the ATPase delta chain family. In terms of assembly, F-type ATPases have 2 components, F(1) - the catalytic core - and F(0) - the membrane proton channel. F(1) has five subunits: alpha(3), beta(3), gamma(1), delta(1), epsilon(1). F(0) has three main subunits: a(1), b(2) and c(10-14). The alpha and beta chains form an alternating ring which encloses part of the gamma chain. F(1) is attached to F(0) by a central stalk formed by the gamma and epsilon chains, while a peripheral stalk is formed by the delta and b chains.

Its subcellular location is the cell inner membrane. Functionally, f(1)F(0) ATP synthase produces ATP from ADP in the presence of a proton or sodium gradient. F-type ATPases consist of two structural domains, F(1) containing the extramembraneous catalytic core and F(0) containing the membrane proton channel, linked together by a central stalk and a peripheral stalk. During catalysis, ATP synthesis in the catalytic domain of F(1) is coupled via a rotary mechanism of the central stalk subunits to proton translocation. Its function is as follows. This protein is part of the stalk that links CF(0) to CF(1). It either transmits conformational changes from CF(0) to CF(1) or is implicated in proton conduction. The sequence is that of ATP synthase subunit delta from Neisseria meningitidis serogroup B (strain ATCC BAA-335 / MC58).